Here is a 475-residue protein sequence, read N- to C-terminus: Aspartyl/glutamyl-tRNA(Asn/Gln) amidotransferase subunit B (475 aa).

Belongs to the GatB/GatE family. GatB subfamily. As to quaternary structure, heterotrimer of A, B and C subunits.

The catalysed reaction is L-glutamyl-tRNA(Gln) + L-glutamine + ATP + H2O = L-glutaminyl-tRNA(Gln) + L-glutamate + ADP + phosphate + H(+). The enzyme catalyses L-aspartyl-tRNA(Asn) + L-glutamine + ATP + H2O = L-asparaginyl-tRNA(Asn) + L-glutamate + ADP + phosphate + 2 H(+). Its function is as follows. Allows the formation of correctly charged Asn-tRNA(Asn) or Gln-tRNA(Gln) through the transamidation of misacylated Asp-tRNA(Asn) or Glu-tRNA(Gln) in organisms which lack either or both of asparaginyl-tRNA or glutaminyl-tRNA synthetases. The reaction takes place in the presence of glutamine and ATP through an activated phospho-Asp-tRNA(Asn) or phospho-Glu-tRNA(Gln). This chain is Aspartyl/glutamyl-tRNA(Asn/Gln) amidotransferase subunit B, found in Bacillus cereus (strain B4264).